The chain runs to 424 residues: Myb family transcription factor RLI1 (424 aa).

The segment at 144-165 (RPQKRDSGERTPLPPPSQQQHQ) is disordered. One can recognise an HTH myb-type domain in the interval 238–298 (APSKTRIRWT…HLQKYRIAKY (61 aa)). A DNA-binding region (H-T-H motif) is located at residues 269-294 (PKGILKLMNSDGLTIYHIKSHLQKYR). Positions 326–391 (MQITEALRVQ…ELDDVVAFAA (66 aa)) form a coiled coil. Positions 342 to 347 (LHEQLE) match the LHEQLE motif.

Belongs to the MYB-CC family. As to quaternary structure, interacts with SPX1 and SPX2 in the nucleus; these interactions prevent binding to the promoters of target genes, thus regulating negatively leaf inclination in response to phosphate (Pi) starvation. Homodimer. Interacts with PHR2 in the nucleus. Mostly expressed in roots and leaves blades and, to a lower extent, in leaves sheaths, culms and panicles. Localized in leaves lamina joints. In terms of tissue distribution, expressed equally in shoots and roots. As to expression, mostly expressed in shoots and, to a lower extent, in roots.

Its subcellular location is the nucleus. In terms of biological role, transcription factor binding to specific DNA sequences of target genes promoters, such as the motif R1BS 5'-NAKATNCN-3' and the motif P1BS 5'-GNATATNC-3' to trigger their expression. Nitrate-induced component involved in modulating phosphate (Pi) response and homeostasis together with PHR2; activates directly the expression of Pi starvation-induced (PSI) genes upon nitrate disponibility, thus triggering the nitrate-induced phosphate response (NIPR) promoting Pi uptake activity. Its function is as follows. Binds preferentially to the P1BS motif 5'-GNATATNC-3' in target genes promoters. Functionally, binds preferentially to the R1BS motif 5'-NAKATNCN-3' in target genes promoters, including several genes involved in the plant hormone signal transduction pathway. Involved in the shoot architecture; positively regulates leaf inclination by affecting lamina joint cell elongation via the direct promotion of ILI4/BU1 and BC1 genes expression, especially in response to phosphate (Pi) availability. Regulates both brassinolide (BL) biosynthesis and signaling by directly activating BL-biosynthesis and signaling genes. This Oryza sativa subsp. japonica (Rice) protein is Myb family transcription factor RLI1.